The chain runs to 324 residues: Kelch domain-containing protein AF_2170 (324 aa).

2 Kelch repeats span residues 229-276 and 277-323; these read YIFA…VGGE and YIYI…NNGK.

The protein is Kelch domain-containing protein AF_2170 of Archaeoglobus fulgidus (strain ATCC 49558 / DSM 4304 / JCM 9628 / NBRC 100126 / VC-16).